Here is a 367-residue protein sequence, read N- to C-terminus: Cytochrome P450 119 (367 aa).

6 residues coordinate heme: histidine 76, arginine 80, threonine 257, arginine 259, histidine 315, and cysteine 317.

This sequence belongs to the cytochrome P450 family. Heme serves as cofactor.

Its subcellular location is the cytoplasm. This Sulfurisphaera tokodaii (strain DSM 16993 / JCM 10545 / NBRC 100140 / 7) (Sulfolobus tokodaii) protein is Cytochrome P450 119 (cyp119).